A 333-amino-acid polypeptide reads, in one-letter code: Probable tRNA pseudouridine synthase B (333 aa).

D66 (nucleophile) is an active-site residue. The 76-residue stretch at L233–M308 folds into the PUA domain.

It belongs to the pseudouridine synthase TruB family. Type 2 subfamily.

The enzyme catalyses uridine(55) in tRNA = pseudouridine(55) in tRNA. In terms of biological role, could be responsible for synthesis of pseudouridine from uracil-55 in the psi GC loop of transfer RNAs. The polypeptide is Probable tRNA pseudouridine synthase B (Methanococcus maripaludis (strain DSM 14266 / JCM 13030 / NBRC 101832 / S2 / LL)).